Reading from the N-terminus, the 160-residue chain is uncharacterized protein (160 aa).

Over 1 to 33 (MPLRPCRHHQGFLPKKQWRAKFPQLIVLMGRVA) the chain is Extracellular. The helical transmembrane segment at 34-54 (AEELLPAVAVAAVVVAVVVAV) threads the bilayer. Residues 55 to 68 (ERVVPLLFVHRPDS) lie on the Cytoplasmic side of the membrane. Residues 69–89 (FFLIFFFQSCFVCCCCCCSCS) form a helical membrane-spanning segment. Over 90-119 (TSLKAYSSEKEKQKYGKRGNGNTPLVQRLV) the chain is Extracellular. The chain crosses the membrane as a helical span at residues 120–140 (TLSYLALLILVLSIELLTWFV). At 141-160 (KKQRTGNKKQKDKEKNALLL) the chain is on the cytoplasmic side.

The protein resides in the membrane. This is an uncharacterized protein from Saccharomyces cerevisiae (strain ATCC 204508 / S288c) (Baker's yeast).